A 251-amino-acid polypeptide reads, in one-letter code: 2,3-bisphosphoglycerate-dependent phosphoglycerate mutase (251 aa).

Substrate is bound by residues 11-18 (RHGNSDWN), 24-25 (TG), R63, 90-93 (ERHY), K101, 117-118 (RR), and 185-186 (GN). H12 functions as the Tele-phosphohistidine intermediate in the catalytic mechanism. E90 serves as the catalytic Proton donor/acceptor.

Belongs to the phosphoglycerate mutase family. BPG-dependent PGAM subfamily.

The enzyme catalyses (2R)-2-phosphoglycerate = (2R)-3-phosphoglycerate. It functions in the pathway carbohydrate degradation; glycolysis; pyruvate from D-glyceraldehyde 3-phosphate: step 3/5. Functionally, catalyzes the interconversion of 2-phosphoglycerate and 3-phosphoglycerate. The chain is 2,3-bisphosphoglycerate-dependent phosphoglycerate mutase from Clavibacter sepedonicus (Clavibacter michiganensis subsp. sepedonicus).